Consider the following 252-residue polypeptide: 3-deoxy-manno-octulosonate cytidylyltransferase (252 aa).

The protein belongs to the KdsB family.

It localises to the cytoplasm. The catalysed reaction is 3-deoxy-alpha-D-manno-oct-2-ulosonate + CTP = CMP-3-deoxy-beta-D-manno-octulosonate + diphosphate. The protein operates within nucleotide-sugar biosynthesis; CMP-3-deoxy-D-manno-octulosonate biosynthesis; CMP-3-deoxy-D-manno-octulosonate from 3-deoxy-D-manno-octulosonate and CTP: step 1/1. It functions in the pathway bacterial outer membrane biogenesis; lipopolysaccharide biosynthesis. In terms of biological role, activates KDO (a required 8-carbon sugar) for incorporation into bacterial lipopolysaccharide in Gram-negative bacteria. In Nitratidesulfovibrio vulgaris (strain ATCC 29579 / DSM 644 / CCUG 34227 / NCIMB 8303 / VKM B-1760 / Hildenborough) (Desulfovibrio vulgaris), this protein is 3-deoxy-manno-octulosonate cytidylyltransferase.